Consider the following 425-residue polypeptide: tRNA(Ile)-lysidine synthase (425 aa).

ATP is bound at residue 27 to 32 (SGGLDS).

Belongs to the tRNA(Ile)-lysidine synthase family.

It localises to the cytoplasm. The catalysed reaction is cytidine(34) in tRNA(Ile2) + L-lysine + ATP = lysidine(34) in tRNA(Ile2) + AMP + diphosphate + H(+). Functionally, ligates lysine onto the cytidine present at position 34 of the AUA codon-specific tRNA(Ile) that contains the anticodon CAU, in an ATP-dependent manner. Cytidine is converted to lysidine, thus changing the amino acid specificity of the tRNA from methionine to isoleucine. The sequence is that of tRNA(Ile)-lysidine synthase from Streptococcus pneumoniae serotype 2 (strain D39 / NCTC 7466).